The following is a 383-amino-acid chain: MSSRPLTIGLVAGETSGDILGAGLIRSLKEKVPDARFVGVAGPRMQAEGCEAWYEMEELAVMGIVEVLGRLPRLLKIRRDLTQRFSELQPDVFVGIDAPDFNITLEGNLKQRGINTIHYVSPSVWAWRQKRVFKIGKATNLVLAFLPFEKAFYDRFNVPCRFIGHTMADAMPLHPDKQAARATLGIAPEAHCLALLPGSRNAEVEMLSADFLKTAVLLREHFPDLEIVVPLVNSKRREQFEQIKSSVAPDLRVHLLDGQAREAMIASDAALLASGTAALECMLAKCPMVVGYRMKPFTFWLAQRLVKTQWVSLPNLLAGRELVTELLQTDCTPDKLAAALLPLFADSDKTAALRTTFVDLHQQIRCNADEQAAQAVLELVKPR.

This sequence belongs to the LpxB family.

It catalyses the reaction 2-N,3-O-bis[(3R)-3-hydroxytetradecanoyl]-alpha-D-glucosaminyl 1-phosphate + UDP-2-N,3-O-bis[(3R)-3-hydroxytetradecanoyl]-alpha-D-glucosamine = lipid A disaccharide (E. coli) + UDP + H(+). It carries out the reaction a lipid X + a UDP-2-N,3-O-bis[(3R)-3-hydroxyacyl]-alpha-D-glucosamine = a lipid A disaccharide + UDP + H(+). It participates in glycolipid biosynthesis; lipid IV(A) biosynthesis; lipid IV(A) from (3R)-3-hydroxytetradecanoyl-[acyl-carrier-protein] and UDP-N-acetyl-alpha-D-glucosamine: step 5/6. Its function is as follows. Condensation of UDP-2,3-diacylglucosamine and 2,3-diacylglucosamine-1-phosphate to form lipid A disaccharide, a precursor of lipid A, a phosphorylated glycolipid that anchors the lipopolysaccharide to the outer membrane of the cell. The sequence is that of Lipid-A-disaccharide synthase from Pectobacterium carotovorum subsp. carotovorum (strain PC1).